We begin with the raw amino-acid sequence, 688 residues long: Translation initiation factor IF-2 (688 aa).

Residues 50 to 62 (LLSGKEKSEKTKE) are compositionally biased toward basic and acidic residues. A disordered region spans residues 50 to 95 (LLSGKEKSEKTKEEDDEIETTAKNPIKESINNKKSNKRDDKKEKVN). Low complexity predominate over residues 72–82 (KNPIKESINNK). Residues 86 to 95 (KRDDKKEKVN) are compositionally biased toward basic and acidic residues. Positions 187 to 354 (KRSPIITVMG…MILLSSEILE (168 aa)) constitute a tr-type G domain. The G1 stretch occupies residues 196-203 (GHVDHGKT). GTP is bound at residue 196 to 203 (GHVDHGKT). Residues 221-225 (GITQH) form a G2 region. Residues 242 to 245 (DTPG) are G3. GTP is bound by residues 242-246 (DTPGH) and 296-299 (NKID). The G4 stretch occupies residues 296–299 (NKID). A G5 region spans residues 332–334 (SAH).

Belongs to the TRAFAC class translation factor GTPase superfamily. Classic translation factor GTPase family. IF-2 subfamily.

The protein resides in the cytoplasm. In terms of biological role, one of the essential components for the initiation of protein synthesis. Protects formylmethionyl-tRNA from spontaneous hydrolysis and promotes its binding to the 30S ribosomal subunits. Also involved in the hydrolysis of GTP during the formation of the 70S ribosomal complex. The chain is Translation initiation factor IF-2 from Clostridium botulinum (strain 657 / Type Ba4).